A 234-amino-acid chain; its full sequence is 2,3,4,5-tetrahydropyridine-2,6-dicarboxylate N-acetyltransferase (234 aa).

It belongs to the transferase hexapeptide repeat family. DapH subfamily.

The enzyme catalyses (S)-2,3,4,5-tetrahydrodipicolinate + acetyl-CoA + H2O = L-2-acetamido-6-oxoheptanedioate + CoA. The protein operates within amino-acid biosynthesis; L-lysine biosynthesis via DAP pathway; LL-2,6-diaminopimelate from (S)-tetrahydrodipicolinate (acetylase route): step 1/3. In terms of biological role, catalyzes the transfer of an acetyl group from acetyl-CoA to tetrahydrodipicolinate. The polypeptide is 2,3,4,5-tetrahydropyridine-2,6-dicarboxylate N-acetyltransferase (Lacticaseibacillus casei (strain BL23) (Lactobacillus casei)).